We begin with the raw amino-acid sequence, 349 residues long: Ferredoxin--NADP reductase 1 (349 aa).

E36, K44, Y48, V88, L123, D290, and S331 together coordinate FAD.

This sequence belongs to the ferredoxin--NADP reductase type 2 family. In terms of assembly, homodimer. Requires FAD as cofactor.

The enzyme catalyses 2 reduced [2Fe-2S]-[ferredoxin] + NADP(+) + H(+) = 2 oxidized [2Fe-2S]-[ferredoxin] + NADPH. The polypeptide is Ferredoxin--NADP reductase 1 (Lysinibacillus sphaericus (strain C3-41)).